We begin with the raw amino-acid sequence, 146 residues long: Large ribosomal subunit protein uL22 (146 aa).

The protein belongs to the universal ribosomal protein uL22 family. As to quaternary structure, part of the 50S ribosomal subunit.

In terms of biological role, this protein binds specifically to 23S rRNA; its binding is stimulated by other ribosomal proteins, e.g. L4, L17, and L20. It is important during the early stages of 50S assembly. It makes multiple contacts with different domains of the 23S rRNA in the assembled 50S subunit and ribosome. Its function is as follows. The globular domain of the protein is located near the polypeptide exit tunnel on the outside of the subunit, while an extended beta-hairpin is found that lines the wall of the exit tunnel in the center of the 70S ribosome. The protein is Large ribosomal subunit protein uL22 of Nocardioides sp. (strain ATCC BAA-499 / JS614).